Reading from the N-terminus, the 308-residue chain is Aspartate carbamoyltransferase catalytic subunit (308 aa).

Carbamoyl phosphate-binding residues include Arg59 and Thr60. Lys87 contacts L-aspartate. The carbamoyl phosphate site is built by Arg109, His137, and Gln140. Positions 170 and 224 each coordinate L-aspartate. Positions 265 and 266 each coordinate carbamoyl phosphate.

The protein belongs to the aspartate/ornithine carbamoyltransferase superfamily. ATCase family. In terms of assembly, heterododecamer (2C3:3R2) of six catalytic PyrB chains organized as two trimers (C3), and six regulatory PyrI chains organized as three dimers (R2).

It carries out the reaction carbamoyl phosphate + L-aspartate = N-carbamoyl-L-aspartate + phosphate + H(+). The protein operates within pyrimidine metabolism; UMP biosynthesis via de novo pathway; (S)-dihydroorotate from bicarbonate: step 2/3. Catalyzes the condensation of carbamoyl phosphate and aspartate to form carbamoyl aspartate and inorganic phosphate, the committed step in the de novo pyrimidine nucleotide biosynthesis pathway. The protein is Aspartate carbamoyltransferase catalytic subunit of Flavobacterium johnsoniae (strain ATCC 17061 / DSM 2064 / JCM 8514 / BCRC 14874 / CCUG 350202 / NBRC 14942 / NCIMB 11054 / UW101) (Cytophaga johnsonae).